The sequence spans 334 residues: Transcription factor MYB92 (334 aa).

2 HTH myb-type domains span residues 9–61 (DSGL…TNYL) and 62–116 (RPDI…KKKL). DNA-binding regions (H-T-H motif) lie at residues 37–61 (WRAL…TNYL) and 89–112 (WSTI…NTHL).

As to quaternary structure, interacts with FBX5. In terms of tissue distribution, highly expressed in roots and at lower levels in stems, flowers and siliques.

The protein localises to the nucleus. Functionally, probable transcription factor. The chain is Transcription factor MYB92 from Arabidopsis thaliana (Mouse-ear cress).